The chain runs to 389 residues: Xylose isomerase (389 aa).

Residues His101 and Asp104 contribute to the active site. Residues Glu232, Glu268, His271, Asp296, Asp307, and Asp309 each contribute to the Mg(2+) site.

Belongs to the xylose isomerase family. Homotetramer. Mg(2+) is required as a cofactor.

It is found in the cytoplasm. The catalysed reaction is alpha-D-xylose = alpha-D-xylulofuranose. In Lactococcus lactis subsp. cremoris (strain SK11), this protein is Xylose isomerase.